Here is a 379-residue protein sequence, read N- to C-terminus: Chaperone protein DnaJ (379 aa).

The region spanning 5 to 70 (DYYETLEVSQ…QKRAAYDQYG (66 aa)) is the J domain. The CR-type zinc finger occupies 135–213 (GKSLEIKVPT…CRGQGRVEKT (79 aa)). Positions 148, 151, 165, 168, 187, 190, 201, and 204 each coordinate Zn(2+). CXXCXGXG motif repeat units lie at residues 148–155 (CEPCDGSG), 165–172 (CSTCHGHG), 187–194 (CPTCSGKG), and 201–208 (CTSCRGQG).

It belongs to the DnaJ family. Homodimer. Requires Zn(2+) as cofactor.

Its subcellular location is the cytoplasm. Its function is as follows. Participates actively in the response to hyperosmotic and heat shock by preventing the aggregation of stress-denatured proteins and by disaggregating proteins, also in an autonomous, DnaK-independent fashion. Unfolded proteins bind initially to DnaJ; upon interaction with the DnaJ-bound protein, DnaK hydrolyzes its bound ATP, resulting in the formation of a stable complex. GrpE releases ADP from DnaK; ATP binding to DnaK triggers the release of the substrate protein, thus completing the reaction cycle. Several rounds of ATP-dependent interactions between DnaJ, DnaK and GrpE are required for fully efficient folding. Also involved, together with DnaK and GrpE, in the DNA replication of plasmids through activation of initiation proteins. This chain is Chaperone protein DnaJ, found in Colwellia maris.